Here is a 483-residue protein sequence, read N- to C-terminus: MSSATASNTFFLHSCFLLFCLLSAPSCVSMFSGIETGDLEKRDDLFPQILRDEAVARLYELGKVSDASGYLERTFLSPASMRAINLIRKWMEDAGLRTWVDQMGNVHGRVDGANANAEALLIGSHMDTVVDAGMFDGSLGIVSAISALKAMHVNGKLQKLKRPVEVIAFSDEEGVRFQTTFLGSGAIAGILPGTTLEISDKREVMIKDFLKENSIDITEESLLKLKYDPKSVWGYVEVHIEQGPVLEQVGFPLGVVKGIAGQTRLKVTVRGSQGHAGTVPMSMRQDPMAAAAEQIVVLESLCKHPEEYLSYDGHCSDSTVKSLSTSLVCTVGEISTWPSASNVIPGQVTYTVDIRAIDDLGREAVIYDLSKQIYQICDKRSVSCIIEHKHDAGAVICDSDLSSQLKSAAYSALKKMEGDIQDEVPTLMSGAGHDAMAISHLTKVGMLFVRCRGGISHSPQEHVLDNDVWAASLATLSFLENLS.

An N-terminal signal peptide occupies residues 1–30 (MSSATASNTFFLHSCFLLFCLLSAPSCVSM). The Mn(2+) site is built by histidine 125, aspartate 136, glutamate 173, histidine 239, and histidine 457.

This sequence belongs to the peptidase M20A family. As to quaternary structure, homodimer. It depends on Mn(2+) as a cofactor. As to expression, expressed in stems and leaves, and at low levels in roots. Not detected in nodules.

It is found in the endoplasmic reticulum. It catalyses the reaction allantoate + H2O + 2 H(+) = (S)-2-ureidoglycine + NH4(+) + CO2. In terms of biological role, involved in the catabolism of purine nucleotides. Can use allantoate as substrate. The sequential activity of AAH, UGLYAH and UAH allows a complete purine breakdown without the intermediate generation of urea. The polypeptide is Allantoate deiminase 2 (Glycine max (Soybean)).